Consider the following 171-residue polypeptide: MTRQNAYTREDLLACSRGELFGPGNAQLPAPNMLMIDRIVHISETGGKHGKGEIVAELDINPDLWFFSCHFEGDPVMPGCLGLDAMWQLVGFYLGWQGNPGRGRALGSGEVKFFGQVLPTAKKVTYNIHIKRTINRSLILGIADGSVSVDGREIYSAEGLRVGLFTSTDSF.

H70 is a catalytic residue.

It belongs to the thioester dehydratase family. FabA subfamily. In terms of assembly, homodimer.

It is found in the cytoplasm. It carries out the reaction a (3R)-hydroxyacyl-[ACP] = a (2E)-enoyl-[ACP] + H2O. It catalyses the reaction (3R)-hydroxydecanoyl-[ACP] = (2E)-decenoyl-[ACP] + H2O. The enzyme catalyses (2E)-decenoyl-[ACP] = (3Z)-decenoyl-[ACP]. Its pathway is lipid metabolism; fatty acid biosynthesis. In terms of biological role, necessary for the introduction of cis unsaturation into fatty acids. Catalyzes the dehydration of (3R)-3-hydroxydecanoyl-ACP to E-(2)-decenoyl-ACP and then its isomerization to Z-(3)-decenoyl-ACP. Can catalyze the dehydratase reaction for beta-hydroxyacyl-ACPs with saturated chain lengths up to 16:0, being most active on intermediate chain length. In Ectopseudomonas mendocina (strain ymp) (Pseudomonas mendocina), this protein is 3-hydroxydecanoyl-[acyl-carrier-protein] dehydratase.